The primary structure comprises 258 residues: Protein U52 (258 aa).

The protein belongs to the herpesviridae UL79 family.

The polypeptide is Protein U52 (U52) (Human herpesvirus 6A (strain Uganda-1102) (HHV-6 variant A)).